The sequence spans 774 residues: Armadillo-like helical domain-containing protein 4 (774 aa).

The first 27 residues, Met-1 to Ala-27, serve as a signal peptide directing secretion. The Extracellular portion of the chain corresponds to Phe-28–Met-714. A compositionally biased stretch (basic and acidic residues) spans His-41–Thr-52. 2 disordered regions span residues His-41–Lys-63 and Gln-97–Ser-135. Asn-57 carries an N-linked (GlcNAc...) asparagine glycan. Residue Asn-189 is glycosylated (N-linked (GlcNAc...) asparagine). Residues Lys-221–Thr-233 are compositionally biased toward basic and acidic residues. 2 disordered regions span residues Lys-221–Glu-275 and Ala-600–Glu-669. Positions Ser-258–Glu-275 are enriched in polar residues. Positions Leu-607–Thr-651 are enriched in acidic residues. Residues Leu-715 to Ile-735 traverse the membrane as a helical segment. The Cytoplasmic segment spans residues Lys-736–Phe-774. Residues Ser-769 and Ser-770 each carry the phosphoserine modification.

Interacts with IL6ST; this interaction prevents IL6ST protein homodimerization and bridges ARMH4 with IL6R and STAT3 and therefore inhibits phosphorylation of STAT3 at 'Tyr-705'. Interacts (via cytoplasmic tail) with RICTOR; this interaction bridges ARMH4 to the mTORC2 complex and inhibits the mTORC2 kinase activity. Expressed in podocytes.

The protein localises to the membrane. May modulate immune response and may play a role in inflammation. Down-modulates STAT3 signaling throught direct interaction with IL6ST, resulting in the inhibition of phosphorylation of STAT3 at 'Tyr-705'. May negatively regulates AKT signaling by modulating the activity of mTORC2 complex through RICTOR interaction. This is Armadillo-like helical domain-containing protein 4 from Homo sapiens (Human).